Consider the following 218-residue polypeptide: MSYTWLITRASSGRGAAIALAALEAGHKVIAGARNPAKASQVRPEIQNQGGTWLRLDDSTADVRHVIAKAAKEHGLNVLVNNAGGYALRGVLEDFSETELYQQMETNFFGPIRAIQGALPWSRAQKPGTIFNISSTSDITGFTGFSLYAASKAALEGASEALYGELALFGIRVLVVQPGASRTKFQSAGPRPAVSEACVGTTVDAILQRAVGMAAERR.

NADP(+)-binding residues include lysine 38, aspartate 57, and asparagine 82. The active-site Proton donor is the serine 134. Residues tyrosine 148, lysine 152, and threonine 183 each coordinate NADP(+). Tyrosine 148 serves as the catalytic Proton acceptor. Catalysis depends on lysine 152, which acts as the Lowers pKa of active site Tyr.

The protein belongs to the short-chain dehydrogenases/reductases (SDR) family.

It participates in pigment biosynthesis. In terms of biological role, oxidoreductase; part of the gene cluster that mediates the biosynthesis of the bianthraquinone cladofulvin, a conidial pigment not required for virulence but that plays a role in fitness and resistance to environmental stresses including UV light and low-temperature stress. The pathway begins with the synthesis of atrochrysone thioester by the polyketide synthase (PKS) claG. The atrochrysone carboxyl ACP thioesterase claF then breaks the thioester bond and releases the atrochrysone carboxylic acid from claG. This compound is decarboxylated by claH to yield emodin, which is further converted to chrysophanol hydroquinone by the reductase claC and the dehydratase claB. The cytochrome P450 monooxygenase claM then catalyzes the dimerization of nataloe-emodin to cladofulvin. This Passalora fulva (Tomato leaf mold) protein is Oxidoreductase claN.